Consider the following 500-residue polypeptide: Glutathione gamma-glutamylcysteinyltransferase 1 (500 aa).

One can recognise a Peptidase C83 domain in the interval methionine 1–serine 221. Residues cysteine 56, histidine 162, and aspartate 180 contribute to the active site.

The protein belongs to the phytochelatin synthase family. In terms of tissue distribution, expressed in roots and shoots.

It catalyses the reaction [Glu(-Cys)](n)-Gly + glutathione + H(+) = [Glu(-Cys)](n+1)-Gly + glycine. With respect to regulation, requires cadmium for activity. In terms of biological role, involved in the synthesis of phytochelatins (PC) and homophytochelatins (hPC), the heavy-metal-binding peptides of plants. The sequence is that of Glutathione gamma-glutamylcysteinyltransferase 1 (PCS1) from Triticum aestivum (Wheat).